Consider the following 238-residue polypeptide: ATP synthase subunit a (238 aa).

The next 6 membrane-spanning stretches (helical) occupy residues 18–38 (TTNL…VFAL), 76–96 (FGLY…IGLF), 114–134 (PIVT…SGVA), 150–170 (FKVW…TLGL), 188–208 (GIAF…ALIW), and 211–231 (FSVF…SVYI).

Belongs to the ATPase A chain family. F-type ATPases have 2 components, CF(1) - the catalytic core - and CF(0) - the membrane proton channel. CF(1) has five subunits: alpha(3), beta(3), gamma(1), delta(1), epsilon(1). CF(0) has three main subunits: a(1), b(2) and c(9-12). The alpha and beta chains form an alternating ring which encloses part of the gamma chain. CF(1) is attached to CF(0) by a central stalk formed by the gamma and epsilon chains, while a peripheral stalk is formed by the delta and b chains.

The protein localises to the cell membrane. Functionally, key component of the proton channel; it plays a direct role in the translocation of protons across the membrane. The polypeptide is ATP synthase subunit a (Pediococcus pentosaceus (strain ATCC 25745 / CCUG 21536 / LMG 10740 / 183-1w)).